Reading from the N-terminus, the 794-residue chain is uncharacterized protein (794 aa).

A run of 9 helical transmembrane segments spans residues 34–54, 67–87, 99–119, 132–152, 257–277, 283–303, 315–335, 353–373, and 421–441; these read FSAS…VFAV, ITAA…AHLI, MLAD…AFAS, LFLF…ADVT, VGPS…AMGL, LAWI…MFQL, WSVN…VLVF, LGAL…ATLF, and WTGT…LMGV.

Its subcellular location is the cell membrane. This is an uncharacterized protein from Corynebacterium glutamicum (strain ATCC 13032 / DSM 20300 / JCM 1318 / BCRC 11384 / CCUG 27702 / LMG 3730 / NBRC 12168 / NCIMB 10025 / NRRL B-2784 / 534).